The primary structure comprises 116 residues: Iron-sulfur cluster insertion protein ErpA (116 aa).

Positions 44, 108, and 110 each coordinate iron-sulfur cluster.

Belongs to the HesB/IscA family. In terms of assembly, homodimer. Iron-sulfur cluster serves as cofactor.

Functionally, required for insertion of 4Fe-4S clusters for at least IspG. This chain is Iron-sulfur cluster insertion protein ErpA, found in Shewanella baltica (strain OS223).